Reading from the N-terminus, the 112-residue chain is uncharacterized protein (112 aa).

The N-terminal stretch at 1–25 (MKGTKLAVVVGMTVAAVSLAAPAQA) is a signal peptide.

This is an uncharacterized protein from Mycobacterium tuberculosis (strain CDC 1551 / Oshkosh).